Consider the following 396-residue polypeptide: Elongation factor Tu (396 aa).

The region spanning 11 to 205 is the tr-type G domain; that stretch reads KPHVNIGTIG…VVDEYIPTPK (195 aa). Residues 20 to 27 form a G1 region; the sequence is GHVDHGKT. 20 to 27 serves as a coordination point for GTP; the sequence is GHVDHGKT. Threonine 27 is a binding site for Mg(2+). Residues 61-65 are G2; it reads GITIN. The tract at residues 82–85 is G3; that stretch reads DAPG. GTP is bound by residues 82–86 and 137–140; these read DAPGH and NKTD. Positions 137–140 are G4; the sequence is NKTD. The G5 stretch occupies residues 175–177; it reads SAL.

This sequence belongs to the TRAFAC class translation factor GTPase superfamily. Classic translation factor GTPase family. EF-Tu/EF-1A subfamily. As to quaternary structure, monomer.

The protein localises to the cytoplasm. It catalyses the reaction GTP + H2O = GDP + phosphate + H(+). In terms of biological role, GTP hydrolase that promotes the GTP-dependent binding of aminoacyl-tRNA to the A-site of ribosomes during protein biosynthesis. In Limosilactobacillus fermentum (strain NBRC 3956 / LMG 18251) (Lactobacillus fermentum), this protein is Elongation factor Tu.